The following is a 527-amino-acid chain: Amidophosphoribosyltransferase (527 aa).

Positions 1-30 are disordered; it reads MAVDSDYVTDRAAGSRQTVTGQQPEQDLNS. Residues 1–34 constitute a propeptide that is removed on maturation; sequence MAVDSDYVTDRAAGSRQTVTGQQPEQDLNSPREE. Positions 15-29 are enriched in polar residues; the sequence is SRQTVTGQQPEQDLN. Residue cysteine 35 is the Nucleophile of the active site. The region spanning 35 to 261 is the Glutamine amidotransferase type-2 domain; it reads CGVFGVWAPG…PGELLAIDAD (227 aa). Cysteine 276 is a [4Fe-4S] cluster binding site. 3 residues coordinate Mg(2+): serine 323, aspartate 385, and aspartate 386. The [4Fe-4S] cluster site is built by cysteine 422, cysteine 478, and cysteine 481.

The protein in the C-terminal section; belongs to the purine/pyrimidine phosphoribosyltransferase family. Requires Mg(2+) as cofactor. It depends on [4Fe-4S] cluster as a cofactor.

The enzyme catalyses 5-phospho-beta-D-ribosylamine + L-glutamate + diphosphate = 5-phospho-alpha-D-ribose 1-diphosphate + L-glutamine + H2O. Its pathway is purine metabolism; IMP biosynthesis via de novo pathway; N(1)-(5-phospho-D-ribosyl)glycinamide from 5-phospho-alpha-D-ribose 1-diphosphate: step 1/2. In terms of biological role, catalyzes the formation of phosphoribosylamine from phosphoribosylpyrophosphate (PRPP) and glutamine. The sequence is that of Amidophosphoribosyltransferase from Mycobacterium bovis (strain ATCC BAA-935 / AF2122/97).